A 557-amino-acid polypeptide reads, in one-letter code: Dihydroxy-acid dehydratase (557 aa).

Cys-50 is a [2Fe-2S] cluster binding site. Residue Asp-82 coordinates Mg(2+). [2Fe-2S] cluster is bound at residue Cys-123. Mg(2+) is bound by residues Asp-124 and Lys-125. Residue Lys-125 is modified to N6-carboxylysine. Cys-195 lines the [2Fe-2S] cluster pocket. Mg(2+) is bound at residue Glu-447. Ser-473 (proton acceptor) is an active-site residue.

The protein belongs to the IlvD/Edd family. Homodimer. It depends on [2Fe-2S] cluster as a cofactor. Requires Mg(2+) as cofactor.

It catalyses the reaction (2R)-2,3-dihydroxy-3-methylbutanoate = 3-methyl-2-oxobutanoate + H2O. It carries out the reaction (2R,3R)-2,3-dihydroxy-3-methylpentanoate = (S)-3-methyl-2-oxopentanoate + H2O. It functions in the pathway amino-acid biosynthesis; L-isoleucine biosynthesis; L-isoleucine from 2-oxobutanoate: step 3/4. The protein operates within amino-acid biosynthesis; L-valine biosynthesis; L-valine from pyruvate: step 3/4. Functionally, functions in the biosynthesis of branched-chain amino acids. Catalyzes the dehydration of (2R,3R)-2,3-dihydroxy-3-methylpentanoate (2,3-dihydroxy-3-methylvalerate) into 2-oxo-3-methylpentanoate (2-oxo-3-methylvalerate) and of (2R)-2,3-dihydroxy-3-methylbutanoate (2,3-dihydroxyisovalerate) into 2-oxo-3-methylbutanoate (2-oxoisovalerate), the penultimate precursor to L-isoleucine and L-valine, respectively. The sequence is that of Dihydroxy-acid dehydratase from Burkholderia pseudomallei (strain 1710b).